A 1352-amino-acid polypeptide reads, in one-letter code: Ubiquitin carboxyl-terminal hydrolase 31 (1352 aa).

Residues 1 to 16 (MSKVTAPGSGPPAAAS) show a composition bias toward low complexity. 2 disordered regions span residues 1-62 (MSKV…RSVG) and 79-119 (SSEG…PPAC). A compositionally biased stretch (gly residues) spans 32-43 (RAGGGGAGGPGA). A compositionally biased stretch (low complexity) spans 44–62 (SGPAAPSSPSSPSSARSVG). Residues 95-117 (PPGPAAAPTPPPCPPPPASPAPP) show a composition bias toward pro residues. In terms of domain architecture, USP spans 128-765 (AGLRNHGNTC…TAYILFYQRR (638 aa)). The active-site Nucleophile is C137. Positions 162-185 (RAGRPEPSPDPEQPAGRGAQGQGE) are disordered. H723 acts as the Proton acceptor in catalysis. Disordered stretches follow at residues 812–835 (LASL…FSTR), 919–939 (SSSY…AVGR), and 951–1352 (DESD…QKPQ). The span at 958–970 (LNSSVVDTQSKHS) shows a compositional bias: polar residues. Low complexity-rich tracts occupy residues 992–1001 (VDQSDSVDSS), 1051–1070 (SSLS…SLKP), 1078–1089 (DSSSRGSGRHSS), and 1101–1138 (PKSQ…GPAT). Residues 1148-1159 (RTSDHSLSREGS) show a composition bias toward basic and acidic residues. Residues 1160 to 1181 (RQSLGSDRASATSTSKPNSPRV) are compositionally biased toward polar residues. Positions 1198–1210 (SSSMASLRSPSTS) are enriched in low complexity. Composition is skewed to basic and acidic residues over residues 1215–1225 (LKRDSKSEDKG) and 1234–1243 (RQKETRRSTD). Residues 1251-1264 (SKKAGGSSVKSVCK) are compositionally biased toward low complexity. N6-acetyllysine is present on K1264. Composition is skewed to polar residues over residues 1278–1290 (PASQ…TTGK) and 1341–1352 (MQTSARPSQKPQ).

The protein belongs to the peptidase C19 family. Post-translationally, acetylated at Lys-1264. Acetylation decreases activity. Deacetylated by SIRT1. As to expression, widely expressed.

It carries out the reaction Thiol-dependent hydrolysis of ester, thioester, amide, peptide and isopeptide bonds formed by the C-terminal Gly of ubiquitin (a 76-residue protein attached to proteins as an intracellular targeting signal).. Functionally, deubiquitinase that recognizes and hydrolyzes the peptide bond at the C-terminal Gly of ubiquitin. May play a role in the regulation of NF-kappa-B signaling pathway by deubiquitinating TRAF2. Its function is as follows. (Microbial infection) Plays a positive role in foot-and-mouth disease and classical swine fever viral infection. Mechanistically, associates with internal ribosomal entry site (IRES) element within the 5'-untranslated region of viral genomes to promote translation of the virus-encoded polyprotein. The protein is Ubiquitin carboxyl-terminal hydrolase 31 (USP31) of Homo sapiens (Human).